Consider the following 338-residue polypeptide: Lipoate-protein ligase A (338 aa).

Residues P29–V216 enclose the BPL/LPL catalytic domain. ATP-binding positions include R71, G76–F79, and K134. K134 is a (R)-lipoate binding site.

The protein belongs to the LplA family. Monomer.

It is found in the cytoplasm. It carries out the reaction L-lysyl-[lipoyl-carrier protein] + (R)-lipoate + ATP = N(6)-[(R)-lipoyl]-L-lysyl-[lipoyl-carrier protein] + AMP + diphosphate + H(+). The protein operates within protein modification; protein lipoylation via exogenous pathway; protein N(6)-(lipoyl)lysine from lipoate: step 1/2. It functions in the pathway protein modification; protein lipoylation via exogenous pathway; protein N(6)-(lipoyl)lysine from lipoate: step 2/2. Catalyzes both the ATP-dependent activation of exogenously supplied lipoate to lipoyl-AMP and the transfer of the activated lipoyl onto the lipoyl domains of lipoate-dependent enzymes. This is Lipoate-protein ligase A from Vibrio cholerae serotype O1 (strain ATCC 39541 / Classical Ogawa 395 / O395).